The chain runs to 457 residues: tRNA-2-methylthio-N(6)-dimethylallyladenosine synthase (457 aa).

Positions 8 to 123 (KKVFIKTFGC…LPEMLARRDA (116 aa)) constitute an MTTase N-terminal domain. Residues Cys17, Cys54, Cys86, Cys160, Cys164, and Cys167 each coordinate [4Fe-4S] cluster. A Radical SAM core domain is found at 146–379 (RVDGATAFVS…QEAIEANGRR (234 aa)). The region spanning 382–449 (QSRVGTVQRI…PHSLRGEVLL (68 aa)) is the TRAM domain.

This sequence belongs to the methylthiotransferase family. MiaB subfamily. Monomer. It depends on [4Fe-4S] cluster as a cofactor.

It localises to the cytoplasm. The catalysed reaction is N(6)-dimethylallyladenosine(37) in tRNA + (sulfur carrier)-SH + AH2 + 2 S-adenosyl-L-methionine = 2-methylsulfanyl-N(6)-dimethylallyladenosine(37) in tRNA + (sulfur carrier)-H + 5'-deoxyadenosine + L-methionine + A + S-adenosyl-L-homocysteine + 2 H(+). Its function is as follows. Catalyzes the methylthiolation of N6-(dimethylallyl)adenosine (i(6)A), leading to the formation of 2-methylthio-N6-(dimethylallyl)adenosine (ms(2)i(6)A) at position 37 in tRNAs that read codons beginning with uridine. The chain is tRNA-2-methylthio-N(6)-dimethylallyladenosine synthase from Methylibium petroleiphilum (strain ATCC BAA-1232 / LMG 22953 / PM1).